Reading from the N-terminus, the 154-residue chain is SsrA-binding protein (154 aa).

Belongs to the SmpB family.

The protein resides in the cytoplasm. Required for rescue of stalled ribosomes mediated by trans-translation. Binds to transfer-messenger RNA (tmRNA), required for stable association of tmRNA with ribosomes. tmRNA and SmpB together mimic tRNA shape, replacing the anticodon stem-loop with SmpB. tmRNA is encoded by the ssrA gene; the 2 termini fold to resemble tRNA(Ala) and it encodes a 'tag peptide', a short internal open reading frame. During trans-translation Ala-aminoacylated tmRNA acts like a tRNA, entering the A-site of stalled ribosomes, displacing the stalled mRNA. The ribosome then switches to translate the ORF on the tmRNA; the nascent peptide is terminated with the 'tag peptide' encoded by the tmRNA and targeted for degradation. The ribosome is freed to recommence translation, which seems to be the essential function of trans-translation. This chain is SsrA-binding protein, found in Lachnoclostridium phytofermentans (strain ATCC 700394 / DSM 18823 / ISDg) (Clostridium phytofermentans).